The sequence spans 892 residues: Exo-beta-D-glucosaminidase (892 aa).

Positions 1-18 (MLANAIAALLLGSGIASA) are cleaved as a signal peptide. Residues 19 to 28 (AGHGSPLTSK) constitute a propeptide that is removed on maturation. Residues N196, N336, and N440 are each glycosylated (N-linked (GlcNAc...) asparagine). D464 functions as the Proton donor in the catalytic mechanism. The active-site Nucleophile is the E539. N-linked (GlcNAc...) asparagine glycosylation is found at N557, N578, N689, and N825.

This sequence belongs to the glycosyl hydrolase 2 family. In terms of assembly, monomer.

Its subcellular location is the secreted. The protein localises to the extracellular space. It catalyses the reaction Hydrolysis of chitosan or chitosan oligosaccharides to remove successive D-glucosamine residues from the non-reducing termini.. Hydrolyzes chitosan and chitooligosaccharides with retention of anomeric configuration. Has no activity against beta-D-galactoside, beta-D-glucuronide, beta-D-mannoside, chitin, glycol chitosan, cellulose, N,N'-diacetylchitibiose and pNP-GlcNAc. This chain is Exo-beta-D-glucosaminidase, found in Hypocrea jecorina (Trichoderma reesei).